We begin with the raw amino-acid sequence, 39 residues long: Photosystem II reaction center protein Y (39 aa).

The chain crosses the membrane as a helical span at residues 4-24 (RVIVVVSPLLIAATWAAINIG).

The protein belongs to the PsbY family. In terms of assembly, PSII is composed of 1 copy each of membrane proteins PsbA, PsbB, PsbC, PsbD, PsbE, PsbF, PsbH, PsbI, PsbJ, PsbK, PsbL, PsbM, PsbT, PsbX, PsbY, PsbZ, Psb30/Ycf12, peripheral proteins PsbO, CyanoQ (PsbQ), PsbU, PsbV and a large number of cofactors. It forms dimeric complexes.

It is found in the cellular thylakoid membrane. Loosely associated component of the core of photosystem II (PSII), it is not always seen in crystals. PSII is a light-driven water plastoquinone oxidoreductase, using light energy to abstract electrons from H(2)O, generating a proton gradient subsequently used for ATP formation. The sequence is that of Photosystem II reaction center protein Y from Synechocystis sp. (strain ATCC 27184 / PCC 6803 / Kazusa).